We begin with the raw amino-acid sequence, 1594 residues long: Mucin-like protein (1594 aa).

The Extracellular portion of the chain corresponds to 1–1530 (DTTAGPDTTS…YETREDGLEM (1530 aa)). 3 TSP type-1 domains span residues 141 to 196 (DGGF…GSCP), 198 to 253 (DGNF…PPCP), and 255 to 310 (DGNF…GPCP). Cystine bridges form between C153–C190, C157–C195, C168–C180, C210–C247, C214–C252, C225–C237, C267–C304, C271–C309, and C282–C294. An NIDO domain is found at 400 to 566 (LTISDDAFEQ…GVWFFRLEMN (167 aa)). One can recognise an AMOP domain in the interval 568–706 (ILSLAGKKCN…RSCFGYTLRR (139 aa)). The VWFD domain occupies 706–901 (RRGLIFGDPH…KWQINASQSL (196 aa)). EGF-like domains lie at 1063–1108 (LILL…QYCQ) and 1110–1156 (KIDA…SICE). Cystine bridges form between C1067-C1075, C1069-C1096, C1098-C1107, C1114-C1127, C1121-C1141, C1144-C1155, C1161-C1173, C1169-C1182, C1285-C1296, C1292-C1305, C1307-C1320, C1326-C1341, C1334-C1350, and C1352-C1363. The 35-residue stretch at 1157 to 1191 (DIDECSDANVSKCDHSCINLPGSYVCDCNQGFSLE) folds into the EGF-like 3; calcium-binding domain. In terms of domain architecture, EGF-like 4; calcium-binding spans 1281-1321 (DINECTTHRHKCSQICHNLDGSYTCSCQPGFNLSPDQTTCE). The 43-residue stretch at 1322 to 1364 (DIDECGLINEAHCEGSLEICINTMGSFRCECQDGFHRVNDTCQ) folds into the EGF-like 5; calcium-binding domain. Residues 1531–1551 (IWLLVGVSVAVAVPLMIVIVI) form a helical membrane-spanning segment. The Cytoplasmic segment spans residues 1552–1593 (LYREYRRIAKQRRKTNNFDLRQWSGARERTIYSGFTNSKSAR).

As to expression, component of the acid-insoluble and acid-soluble organic matrix of the aragonitic skeleton (at protein level).

Its subcellular location is the membrane. In Acropora millepora (Staghorn coral), this protein is Mucin-like protein.